We begin with the raw amino-acid sequence, 400 residues long: Elongation factor Tu (400 aa).

The region spanning 10 to 208 (KPHMNVGTIG…AMDSYFPDPV (199 aa)) is the tr-type G domain. Positions 19–26 (GHIDHGKT) are G1. Position 19-26 (19-26 (GHIDHGKT)) interacts with GTP. Residue Thr-26 coordinates Mg(2+). The G2 stretch occupies residues 60–64 (GITIN). The tract at residues 81-84 (DCPG) is G3. Residues 81-85 (DCPGH) and 136-139 (NKVD) contribute to the GTP site. Residues 136–139 (NKVD) form a G4 region. Residues 174–176 (SAL) form a G5 region.

Belongs to the TRAFAC class translation factor GTPase superfamily. Classic translation factor GTPase family. EF-Tu/EF-1A subfamily. Monomer.

The protein localises to the cytoplasm. It catalyses the reaction GTP + H2O = GDP + phosphate + H(+). In terms of biological role, GTP hydrolase that promotes the GTP-dependent binding of aminoacyl-tRNA to the A-site of ribosomes during protein biosynthesis. In Fervidobacterium nodosum (strain ATCC 35602 / DSM 5306 / Rt17-B1), this protein is Elongation factor Tu.